The chain runs to 506 residues: Bifunctional purine biosynthesis protein PurH (506 aa).

Residues 1 to 146 (MARLALLSVS…KNFAHLTVLC (146 aa)) enclose the MGS-like domain.

It belongs to the PurH family.

The enzyme catalyses (6R)-10-formyltetrahydrofolate + 5-amino-1-(5-phospho-beta-D-ribosyl)imidazole-4-carboxamide = 5-formamido-1-(5-phospho-D-ribosyl)imidazole-4-carboxamide + (6S)-5,6,7,8-tetrahydrofolate. It catalyses the reaction IMP + H2O = 5-formamido-1-(5-phospho-D-ribosyl)imidazole-4-carboxamide. It participates in purine metabolism; IMP biosynthesis via de novo pathway; 5-formamido-1-(5-phospho-D-ribosyl)imidazole-4-carboxamide from 5-amino-1-(5-phospho-D-ribosyl)imidazole-4-carboxamide (10-formyl THF route): step 1/1. It functions in the pathway purine metabolism; IMP biosynthesis via de novo pathway; IMP from 5-formamido-1-(5-phospho-D-ribosyl)imidazole-4-carboxamide: step 1/1. The protein is Bifunctional purine biosynthesis protein PurH of Trichormus variabilis (strain ATCC 29413 / PCC 7937) (Anabaena variabilis).